We begin with the raw amino-acid sequence, 27 residues long: AnmTX Sco 9a-1 (27 aa).

The residue at position 6 (proline 6) is a Hydroxyproline. Disulfide bonds link cysteine 7–cysteine 18 and cysteine 10–cysteine 25.

Its function is as follows. Has analgesic and anti-inflammatory activity in vivo. At a dose of 0.1 and 1 mg/kg, exhibits anti-inflammatory activity by reducing the volume of edema during 24 h better than the nonsteroidal anti-inflammatory drug, Diclofenac, at dose of 1 mg/kg in a mouse model of acute local lambda-carrageenan-induced inflammation. At a dose of 1 mg/kg, reduces the content of tumor necrosis factor-alpha (TNF-alpha). Demonstrates a significant analgesic effect on acute pain sensitivity in the carrageenan-induced thermal hyperalgesia model at doses of 0.1 and 1 mg/kg. Not toxic in mice, however stimulates exploratory motivation and active search behavior, and demonstrates an anti-anxiety effect. Does not exhibit any effect on currents of rat acid-sensing ion channels ASIC1a or ASIC3. The protein is AnmTX Sco 9a-1 of Stomphia coccinea (Spotted swimming anemone).